A 101-amino-acid chain; its full sequence is MNLSLREIQKLLVTVAADVARRRLARGLKLNYSEAVALITDHVVEGARDGKLVADLMQSAREVLRVDQVMEGVDTMVGIIQVEVTFPDGTKLVSVHDPIYK.

This sequence belongs to the urease gamma subunit family. As to quaternary structure, heterotrimer of UreA (gamma), UreB (beta) and UreC (alpha) subunits. Three heterotrimers associate to form the active enzyme.

The protein localises to the cytoplasm. The catalysed reaction is urea + 2 H2O + H(+) = hydrogencarbonate + 2 NH4(+). The protein operates within nitrogen metabolism; urea degradation; CO(2) and NH(3) from urea (urease route): step 1/1. The sequence is that of Urease subunit gamma from Ureaplasma urealyticum serovar 10 (strain ATCC 33699 / Western).